The sequence spans 158 residues: NAD(P)H-quinone oxidoreductase subunit N (158 aa).

It belongs to the complex I NdhN subunit family. In terms of assembly, NDH-1 can be composed of about 15 different subunits; different subcomplexes with different compositions have been identified which probably have different functions.

The protein localises to the cellular thylakoid membrane. The catalysed reaction is a plastoquinone + NADH + (n+1) H(+)(in) = a plastoquinol + NAD(+) + n H(+)(out). The enzyme catalyses a plastoquinone + NADPH + (n+1) H(+)(in) = a plastoquinol + NADP(+) + n H(+)(out). Its function is as follows. NDH-1 shuttles electrons from an unknown electron donor, via FMN and iron-sulfur (Fe-S) centers, to quinones in the respiratory and/or the photosynthetic chain. The immediate electron acceptor for the enzyme in this species is believed to be plastoquinone. Couples the redox reaction to proton translocation, and thus conserves the redox energy in a proton gradient. Cyanobacterial NDH-1 also plays a role in inorganic carbon-concentration. The polypeptide is NAD(P)H-quinone oxidoreductase subunit N (Prochlorococcus marinus (strain MIT 9312)).